We begin with the raw amino-acid sequence, 733 residues long: Phosphoribosylformylglycinamidine synthase subunit PurL (733 aa).

His44 is an active-site residue. 2 residues coordinate ATP: Tyr47 and Lys86. Mg(2+) is bound at residue Glu88. Residues 89–92 (SHNH) and Arg111 contribute to the substrate site. The Proton acceptor role is filled by His90. Asp112 lines the Mg(2+) pocket. Gln240 is a substrate binding site. Position 268 (Asp268) interacts with Mg(2+). 312-314 (ESQ) provides a ligand contact to substrate. ATP contacts are provided by Asp496 and Gly533. Asn534 is a Mg(2+) binding site. Position 536 (Ser536) interacts with substrate.

This sequence belongs to the FGAMS family. As to quaternary structure, monomer. Part of the FGAM synthase complex composed of 1 PurL, 1 PurQ and 2 PurS subunits.

It localises to the cytoplasm. It carries out the reaction N(2)-formyl-N(1)-(5-phospho-beta-D-ribosyl)glycinamide + L-glutamine + ATP + H2O = 2-formamido-N(1)-(5-O-phospho-beta-D-ribosyl)acetamidine + L-glutamate + ADP + phosphate + H(+). Its pathway is purine metabolism; IMP biosynthesis via de novo pathway; 5-amino-1-(5-phospho-D-ribosyl)imidazole from N(2)-formyl-N(1)-(5-phospho-D-ribosyl)glycinamide: step 1/2. Functionally, part of the phosphoribosylformylglycinamidine synthase complex involved in the purines biosynthetic pathway. Catalyzes the ATP-dependent conversion of formylglycinamide ribonucleotide (FGAR) and glutamine to yield formylglycinamidine ribonucleotide (FGAM) and glutamate. The FGAM synthase complex is composed of three subunits. PurQ produces an ammonia molecule by converting glutamine to glutamate. PurL transfers the ammonia molecule to FGAR to form FGAM in an ATP-dependent manner. PurS interacts with PurQ and PurL and is thought to assist in the transfer of the ammonia molecule from PurQ to PurL. This is Phosphoribosylformylglycinamidine synthase subunit PurL from Wolinella succinogenes (strain ATCC 29543 / DSM 1740 / CCUG 13145 / JCM 31913 / LMG 7466 / NCTC 11488 / FDC 602W) (Vibrio succinogenes).